The sequence spans 345 residues: MKAIPTFTISVRQIESLSQIEEKLNNLSLTAKNNIDNASTHEELDKLRVSLLGKKGDLSIILKIMGQLSAAERPIVGQKANFIKINLQDLLNKRKNQLNNEALDQQIKNEKIDVTIPSIGTPPGSKHPLISTQDEIIDIFCGLGYTVESGPEIESDFYNFESLNIPKNHPARDMQDTFYLDENRLLRTHTSPVQIRYLEKNPPPVRIIAPGRVYRRDAVDATHSPVFNQVEVLCIDQDINFSHLRGTVLTFLKTFFGDIPVRFRASYFPFTEPSAEVDVQWKGKWLEVMGCGMVDPKVLEKLGIDSEKWTGFAAGLGVERFCMVRHQIDDIRKFYTNDLRFLEQF.

Glu-272 contacts Mg(2+).

The protein belongs to the class-II aminoacyl-tRNA synthetase family. Phe-tRNA synthetase alpha subunit type 1 subfamily. As to quaternary structure, tetramer of two alpha and two beta subunits. Mg(2+) serves as cofactor.

Its subcellular location is the cytoplasm. The enzyme catalyses tRNA(Phe) + L-phenylalanine + ATP = L-phenylalanyl-tRNA(Phe) + AMP + diphosphate + H(+). In Prochlorococcus marinus (strain MIT 9312), this protein is Phenylalanine--tRNA ligase alpha subunit.